The following is an 83-amino-acid chain: Small ribosomal subunit protein uS17 (83 aa).

This sequence belongs to the universal ribosomal protein uS17 family. In terms of assembly, part of the 30S ribosomal subunit.

Its function is as follows. One of the primary rRNA binding proteins, it binds specifically to the 5'-end of 16S ribosomal RNA. This is Small ribosomal subunit protein uS17 from Campylobacter curvus (strain 525.92).